The sequence spans 712 residues: Protein SDA1 homolog (712 aa).

Thr234 bears the Phosphothreonine mark. A Phosphoserine modification is found at Ser236. Disordered regions lie at residues 488–573 (TIDI…DMRI) and 662–712 (VNEH…KKMK). Acidic residues-rich tracts occupy residues 491 to 501 (IESEDDTDSND) and 516 to 559 (GADD…ESGE). Residues 560 to 572 (ESAKAKKEKKDMR) are compositionally biased toward basic and acidic residues. 2 stretches are compositionally biased toward basic residues: residues 671–692 (REKRKTKNFGMLRHKARSKVKK) and 700–712 (ALRKHLLHQKKMK).

The protein belongs to the SDA1 family.

It localises to the nucleus. It is found in the nucleolus. Functionally, required for 60S pre-ribosomal subunits export to the cytoplasm. This is Protein SDA1 homolog (Mys45A) from Drosophila melanogaster (Fruit fly).